The following is a 515-amino-acid chain: Protein translocase subunit SecD (515 aa).

6 consecutive transmembrane segments (helical) span residues 5–25 (LIAKLLLIAAVIGFCIHLATP), 353–373 (KGILSVTIGMALVLLFMVAYY), 375–395 (LSGLLANMALLMNLIILMGLL), 398–418 (FGATLTLPGIAGIILTIGIAV), 450–470 (FSTILDANITTLIVAVILFQF), and 477–497 (GFAVTLSIGILASMFTAILCT).

This sequence belongs to the SecD/SecF family. SecD subfamily. As to quaternary structure, forms a complex with SecF. Part of the essential Sec protein translocation apparatus which comprises SecA, SecYEG and auxiliary proteins SecDF. Other proteins may also be involved.

It is found in the cell inner membrane. In terms of biological role, part of the Sec protein translocase complex. Interacts with the SecYEG preprotein conducting channel. SecDF uses the proton motive force (PMF) to complete protein translocation after the ATP-dependent function of SecA. The chain is Protein translocase subunit SecD from Desulfurispirillum indicum (strain ATCC BAA-1389 / DSM 22839 / S5).